Consider the following 219-residue polypeptide: Ribosomal RNA large subunit methyltransferase E (219 aa).

Residues Gly60, Trp62, Asp85, Asp101, and Asp126 each contribute to the S-adenosyl-L-methionine site. Catalysis depends on Lys166, which acts as the Proton acceptor.

It belongs to the class I-like SAM-binding methyltransferase superfamily. RNA methyltransferase RlmE family.

Its subcellular location is the cytoplasm. The catalysed reaction is uridine(2552) in 23S rRNA + S-adenosyl-L-methionine = 2'-O-methyluridine(2552) in 23S rRNA + S-adenosyl-L-homocysteine + H(+). Its function is as follows. Specifically methylates the uridine in position 2552 of 23S rRNA at the 2'-O position of the ribose in the fully assembled 50S ribosomal subunit. This Bordetella avium (strain 197N) protein is Ribosomal RNA large subunit methyltransferase E.